The sequence spans 290 residues: Phosphatidylglycerol--prolipoprotein diacylglyceryl transferase (290 aa).

The next 7 membrane-spanning stretches (helical) occupy residues 21–41, 60–80, 96–116, 124–144, 198–218, 225–245, and 260–280; these read VALHWYGLMYLVGFIFAMWLA, LLYAGFLGVFLGGRIGYVLFY, WDGGMSFHGGLIGVILVMVIF, FFQVADFMAPLIPFGLGAGRL, SQLYELALEGVVLFIILNLFI, GSVSGLFLIGYGAFRIIVEFF, and ISMGQILSIPMIVAGIIMMIW. A 1,2-diacyl-sn-glycero-3-phospho-(1'-sn-glycerol) is bound at residue Arg143.

The protein belongs to the Lgt family.

The protein resides in the cell inner membrane. It catalyses the reaction L-cysteinyl-[prolipoprotein] + a 1,2-diacyl-sn-glycero-3-phospho-(1'-sn-glycerol) = an S-1,2-diacyl-sn-glyceryl-L-cysteinyl-[prolipoprotein] + sn-glycerol 1-phosphate + H(+). It participates in protein modification; lipoprotein biosynthesis (diacylglyceryl transfer). Catalyzes the transfer of the diacylglyceryl group from phosphatidylglycerol to the sulfhydryl group of the N-terminal cysteine of a prolipoprotein, the first step in the formation of mature lipoproteins. The polypeptide is Phosphatidylglycerol--prolipoprotein diacylglyceryl transferase (Enterobacter sp. (strain 638)).